The chain runs to 174 residues: DNA endonuclease I-HmuI (174 aa).

This Bacillus subtilis (Bacteriophage SP01) protein is DNA endonuclease I-HmuI.